A 541-amino-acid polypeptide reads, in one-letter code: Long-chain-fatty-acid--CoA ligase (541 aa).

Mg(2+) is bound at residue threonine 184. Valine 231 and tryptophan 234 together coordinate ATP. Tetradecanoyl-AMP is bound by residues glycine 302, glutamine 322, glycine 323, and threonine 327. Glycine 323 and threonine 327 together coordinate ATP. Glutamate 328 provides a ligand contact to Mg(2+). The ATP site is built by aspartate 418, lysine 435, lysine 439, and tryptophan 444. Residues aspartate 418, lysine 435, and lysine 439 each coordinate tetradecanoyl-AMP.

It belongs to the ATP-dependent AMP-binding enzyme family. As to quaternary structure, forms a domain swapped homodimer. Requires Mg(2+) as cofactor.

The catalysed reaction is a long-chain fatty acid + ATP + CoA = a long-chain fatty acyl-CoA + AMP + diphosphate. The enzyme catalyses tetradecanoate + ATP + CoA = tetradecanoyl-CoA + AMP + diphosphate. It catalyses the reaction hexadecanoate + ATP + CoA = hexadecanoyl-CoA + AMP + diphosphate. Its pathway is lipid metabolism; fatty acid metabolism. Catalyzes the esterification of a number of long chain fatty acids with CoA, resulting in the formation of long-chain fatty acyl-CoA. Myristate (C14) is the most efficiently processed fatty acid, followed by palmitate (C16). Also catalyzes the esterification of stearate (C18) and laurate (C12), but at lower efficiency. Does not catalyze the esterification of the unsaturated fatty acids mysteroleic and palmitoleic acids in vitro. This chain is Long-chain-fatty-acid--CoA ligase, found in Thermus thermophilus (strain ATCC 27634 / DSM 579 / HB8).